The primary structure comprises 647 residues: Threonine--tRNA ligase (647 aa).

In terms of domain architecture, TGS spans 1–61 (MIKITFPDGA…EEDGSIEIVT (61 aa)). The segment at 240–538 (DHRKLGKELD…LIETYKGAFP (299 aa)) is catalytic. Zn(2+) is bound by residues C334, H385, and H515.

It belongs to the class-II aminoacyl-tRNA synthetase family. In terms of assembly, homodimer. Zn(2+) serves as cofactor.

Its subcellular location is the cytoplasm. It catalyses the reaction tRNA(Thr) + L-threonine + ATP = L-threonyl-tRNA(Thr) + AMP + diphosphate + H(+). Catalyzes the attachment of threonine to tRNA(Thr) in a two-step reaction: L-threonine is first activated by ATP to form Thr-AMP and then transferred to the acceptor end of tRNA(Thr). Also edits incorrectly charged L-seryl-tRNA(Thr). In Streptococcus pyogenes serotype M4 (strain MGAS10750), this protein is Threonine--tRNA ligase.